We begin with the raw amino-acid sequence, 432 residues long: Short/branched chain specific acyl-CoA dehydrogenase, mitochondrial (432 aa).

The N-terminal 33 residues, 1–33, are a transit peptide targeting the mitochondrion; sequence MEGLAVRLLRGSRLLRRNFLTCLSSWKIPPHVS. Residue Lys70 is modified to N6-acetyllysine; alternate. Lys70 carries the post-translational modification N6-succinyllysine; alternate. Residues 174–183 and 207–209 each bind FAD; these read FCLSEAGAGS and WIS. Residue Ser183 participates in substrate binding. Phosphoserine is present on Ser183. Substrate-binding residues include Tyr229 and Tyr283. Lys284 is modified (N6-acetyllysine; alternate). Lys284 carries the N6-succinyllysine; alternate modification. 291-294 is a substrate binding site; it reads NEGR. FAD is bound by residues Arg319, Gln330, and 387–391; that span reads EWMGG. Catalysis depends on Glu414, which acts as the Proton acceptor. 416–418 provides a ligand contact to FAD; it reads ASN. Position 426 is an N6-acetyllysine (Lys426).

Belongs to the acyl-CoA dehydrogenase family. As to quaternary structure, homotetramer. FAD is required as a cofactor. As to expression, ubiquitously expressed.

Its subcellular location is the mitochondrion matrix. It carries out the reaction 2-methylbutanoyl-CoA + oxidized [electron-transfer flavoprotein] + H(+) = (2E)-2-methylbut-2-enoyl-CoA + reduced [electron-transfer flavoprotein]. The catalysed reaction is (2S)-2-methylbutanoyl-CoA + oxidized [electron-transfer flavoprotein] + H(+) = (2E)-2-methylbut-2-enoyl-CoA + reduced [electron-transfer flavoprotein]. The enzyme catalyses (2R)-2-methylbutanoyl-CoA + oxidized [electron-transfer flavoprotein] + H(+) = ethylacryloyl-CoA + reduced [electron-transfer flavoprotein]. It catalyses the reaction butanoyl-CoA + oxidized [electron-transfer flavoprotein] + H(+) = (2E)-butenoyl-CoA + reduced [electron-transfer flavoprotein]. It carries out the reaction 2-methylpropanoyl-CoA + oxidized [electron-transfer flavoprotein] + H(+) = 2-methylpropenoyl-CoA + reduced [electron-transfer flavoprotein]. The catalysed reaction is hexanoyl-CoA + oxidized [electron-transfer flavoprotein] + H(+) = (2E)-hexenoyl-CoA + reduced [electron-transfer flavoprotein]. The enzyme catalyses 2-methylhexanoyl-CoA + oxidized [electron-transfer flavoprotein] + H(+) = 2-methylhexenoyl-CoA + reduced [electron-transfer flavoprotein]. It catalyses the reaction valproyl-CoA + oxidized [electron-transfer flavoprotein] + H(+) = (2E)-2-propylpent-2-enoyl-CoA + reduced [electron-transfer flavoprotein]. It participates in lipid metabolism; mitochondrial fatty acid beta-oxidation. Its pathway is amino-acid degradation; L-isoleucine degradation. Its activity is regulated as follows. Competitively inhibited by valproyl-CoA. Short and branched chain specific acyl-CoA dehydrogenase that catalyzes the removal of one hydrogen from C-2 and C-3 of the fatty acyl-CoA thioester, resulting in the formation of trans-2-enoyl-CoA. Among the different mitochondrial acyl-CoA dehydrogenases, acts specifically on short and branched chain acyl-CoA derivatives such as (S)-2-methylbutyryl-CoA as well as short straight chain acyl-CoAs such as butyryl-CoA. Plays an important role in the metabolism of L-isoleucine by catalyzing the dehydrogenation of 2-methylbutyryl-CoA, one of the steps of the L-isoleucine catabolic pathway. Can also act on valproyl-CoA, a metabolite of valproic acid, an antiepileptic drug. In Homo sapiens (Human), this protein is Short/branched chain specific acyl-CoA dehydrogenase, mitochondrial.